The sequence spans 345 residues: MKKTLREIAEYLGGTVSGDGEVLIGGLATLDDAGEGTLTFLANPKYAAKVATTKASAVLMGTGGNTHGKNAIFHPNPYLAFAKLLTLFYTAPAKPVGVLPGAFVADGVKLGADVSVYPGASIGAGAVIGDRVVLHPGVVLYPGVVVGNDVTLHANVSVRERCRIGNRVTIHDGTVIGSDGFGYAPDGASYYKIPQIGIVIIEDDVEIGSNCVIDRAALEATRIRRGTKIDNLVQIAHNVVIGEDCIIVSQVGISGSTQLGNHVTLGGQVGVAGHIKIGDNVMIGAKSGVAGNVEPNQVLSGIPVMPHRDWLRSAGIAPKLPEMKKTLSALEKRVAELEAKLAKGE.

Histidine 237 functions as the Proton acceptor in the catalytic mechanism.

This sequence belongs to the transferase hexapeptide repeat family. LpxD subfamily. As to quaternary structure, homotrimer.

The enzyme catalyses a UDP-3-O-[(3R)-3-hydroxyacyl]-alpha-D-glucosamine + a (3R)-hydroxyacyl-[ACP] = a UDP-2-N,3-O-bis[(3R)-3-hydroxyacyl]-alpha-D-glucosamine + holo-[ACP] + H(+). It participates in bacterial outer membrane biogenesis; LPS lipid A biosynthesis. Catalyzes the N-acylation of UDP-3-O-acylglucosamine using 3-hydroxyacyl-ACP as the acyl donor. Is involved in the biosynthesis of lipid A, a phosphorylated glycolipid that anchors the lipopolysaccharide to the outer membrane of the cell. This chain is UDP-3-O-acylglucosamine N-acyltransferase, found in Geobacter sp. (strain M21).